The chain runs to 720 residues: Cyclic nucleotide-gated ion channel 17 (720 aa).

Residues 1-85 (MELRKDKLLM…SEIVLKWNWV (85 aa)) are Cytoplasmic-facing. Residues 86–106 (FIVSCMVALFIDPLYFFVPAI) traverse the membrane as a helical segment. The Extracellular portion of the chain corresponds to 107–121 (GGDKNYPCARTDTSL). Residues 122–142 (SILVTFFRTIADLFYLLHIFI) traverse the membrane as a helical segment. Residues 143-178 (KFRTGFIAPNSSTRVFGRGELVMDPKAIAWRYIKSD) lie on the Cytoplasmic side of the membrane. The chain crosses the membrane as a helical span at residues 179-199 (FIIDLIATLPLPQIVIWFVIS). The Extracellular portion of the chain corresponds to 200-211 (TTKSYRFDHNNN). Residues 212-232 (AIALIVLLQYIPRFYLIIPLS) form a helical membrane-spanning segment. The Cytoplasmic portion of the chain corresponds to 233–252 (SQIVKATGVVTKTAWAGAAY). The helical transmembrane segment at 253-273 (NLLLYMLASHVLGAAWYILSV) threads the bilayer. At 274–377 (DRYTSCWKSR…LSTTMFMGET (104 aa)) the chain is on the extracellular side. The helical transmembrane segment at 378–398 (TFAVLIAIFGLVLFAHLIGNM) threads the bilayer. Over 399–720 (QTYLQSLTVR…EPDFSAEHDD (322 aa)) the chain is Cytoplasmic. Residues 481-605 (FFSQ…SKKL) and E552 contribute to the a nucleoside 3',5'-cyclic phosphate site. Positions 597 to 612 (FRRLHSKKLQHTFRFY) are calmodulin-binding. The region spanning 617-646 (RTWAACFIQAAWRRYKRRVMENNLTAIESM) is the IQ domain.

The protein belongs to the cyclic nucleotide-gated cation channel (TC 1.A.1.5) family. In terms of assembly, homotetramer or heterotetramer. Part of a functional complex containing PSKR1, BAK1, CNGC17, and AHA. Interacts with AHA1, AHA2, and BAK1, but not with PSKR1 or BRI1.

It is found in the cell membrane. Probable cyclic nucleotide-gated ion channel. Forms a functional cation-translocating unit with AHAs that is activated by PSKR1/BAK1 and possibly other BAK1/RLK complexes. Required for PSK-induced protoplast expansion. The sequence is that of Cyclic nucleotide-gated ion channel 17 from Arabidopsis thaliana (Mouse-ear cress).